A 358-amino-acid chain; its full sequence is Protein-glutamate methylesterase/protein-glutamine glutaminase (358 aa).

The 118-residue stretch at 5-122 folds into the Response regulatory domain; sequence SVLIIDDSAL…RNSLEAYTDE (118 aa). 4-aspartylphosphate is present on aspartate 56. A CheB-type methylesterase domain is found at 159 to 351; sequence GISTEKLIII…RRILARLVGA (193 aa). Active-site residues include serine 171, histidine 197, and aspartate 293.

Belongs to the CheB family. Phosphorylated by CheA. Phosphorylation of the N-terminal regulatory domain activates the methylesterase activity.

Its subcellular location is the cytoplasm. The enzyme catalyses [protein]-L-glutamate 5-O-methyl ester + H2O = L-glutamyl-[protein] + methanol + H(+). It catalyses the reaction L-glutaminyl-[protein] + H2O = L-glutamyl-[protein] + NH4(+). Functionally, involved in chemotaxis. Part of a chemotaxis signal transduction system that modulates chemotaxis in response to various stimuli. Catalyzes the demethylation of specific methylglutamate residues introduced into the chemoreceptors (methyl-accepting chemotaxis proteins or MCP) by CheR. Also mediates the irreversible deamidation of specific glutamine residues to glutamic acid. In Nitrosomonas europaea (strain ATCC 19718 / CIP 103999 / KCTC 2705 / NBRC 14298), this protein is Protein-glutamate methylesterase/protein-glutamine glutaminase.